Consider the following 188-residue polypeptide: MIAGISGRVLKKSGNVLLVETKSGVVFEIVCDVQTSEEVEEGGECFLHTFLSVSQDGITLYGFSNERKKELFLSLTKVSRLGPKTALKIISNEDAETLVTMIASQDVEGLSKLPGISKKTAERIVMELKDEFESAGIKDMRIYHESLEALISLGYPEKQAREAVKHVYREGMKTSELIKEALKFLSQR.

The interval 1–64 (MIAGISGRVL…QDGITLYGFS (64 aa)) is domain I. A domain II region spans residues 65–143 (NERKKELFLS…SAGIKDMRIY (79 aa)). A region of interest (flexible linker) is located at residue tyrosine 143. Residues 143 to 188 (YHESLEALISLGYPEKQAREAVKHVYREGMKTSELIKEALKFLSQR) form a domain III region.

The protein belongs to the RuvA family. Homotetramer. Forms an RuvA(8)-RuvB(12)-Holliday junction (HJ) complex. HJ DNA is sandwiched between 2 RuvA tetramers; dsDNA enters through RuvA and exits via RuvB. An RuvB hexamer assembles on each DNA strand where it exits the tetramer. Each RuvB hexamer is contacted by two RuvA subunits (via domain III) on 2 adjacent RuvB subunits; this complex drives branch migration. In the full resolvosome a probable DNA-RuvA(4)-RuvB(12)-RuvC(2) complex forms which resolves the HJ.

It localises to the cytoplasm. Its function is as follows. The RuvA-RuvB-RuvC complex processes Holliday junction (HJ) DNA during genetic recombination and DNA repair, while the RuvA-RuvB complex plays an important role in the rescue of blocked DNA replication forks via replication fork reversal (RFR). RuvA specifically binds to HJ cruciform DNA, conferring on it an open structure. The RuvB hexamer acts as an ATP-dependent pump, pulling dsDNA into and through the RuvAB complex. HJ branch migration allows RuvC to scan DNA until it finds its consensus sequence, where it cleaves and resolves the cruciform DNA. This is Holliday junction branch migration complex subunit RuvA from Thermotoga petrophila (strain ATCC BAA-488 / DSM 13995 / JCM 10881 / RKU-1).